A 130-amino-acid polypeptide reads, in one-letter code: Small ribosomal subunit protein uS9 (130 aa).

This sequence belongs to the universal ribosomal protein uS9 family.

The sequence is that of Small ribosomal subunit protein uS9 from Ectopseudomonas mendocina (strain ymp) (Pseudomonas mendocina).